We begin with the raw amino-acid sequence, 369 residues long: C2 calcium-dependent domain-containing protein 4A (369 aa).

Disordered regions lie at residues 151–176 (PRAPGPATPAAPGCPRPPQDALARRP) and 197–240 (RSRR…PFPE). Residues 153 to 168 (APGPATPAAPGCPRPP) are compositionally biased toward pro residues. The segment covering 220-237 (SQSPARAPSTSPPSSRVP) has biased composition (low complexity). A C2 domain is found at 253 to 369 (AGDALRLAAE…ELSLGALLLL (117 aa)).

It belongs to the C2CD4 family. In terms of tissue distribution, specifically expressed in endothelial cells.

It localises to the nucleus. In terms of biological role, may be involved in inflammatory process. May regulate cell architecture and adhesion. The polypeptide is C2 calcium-dependent domain-containing protein 4A (C2CD4A) (Homo sapiens (Human)).